The chain runs to 264 residues: Proliferating cell nuclear antigen (264 aa).

Residues 61 to 80 (RCDRNISMGMNLANMAKMLK) mediate DNA binding.

The protein belongs to the PCNA family.

Its subcellular location is the nucleus. This protein is an auxiliary protein of DNA polymerase delta and is involved in the control of eukaryotic DNA replication by increasing the polymerase's processibility during elongation of the leading strand. The chain is Proliferating cell nuclear antigen (PCNA) from Nicotiana tabacum (Common tobacco).